Reading from the N-terminus, the 69-residue chain is MSKIKGNVKWFNESKGFGFITPEDGSKDVFVHFSAIQTNGFKTLAEGQRVEFEITNGAKGPSAANVIAL.

The 61-residue stretch at 6-66 folds into the CSD domain; sequence GNVKWFNESK…GAKGPSAANV (61 aa).

It localises to the cytoplasm. The polypeptide is Cold shock-like protein CspE (cspE) (Escherichia coli O6:H1 (strain CFT073 / ATCC 700928 / UPEC)).